A 196-amino-acid polypeptide reads, in one-letter code: Imidazole glycerol phosphate synthase subunit HisH (196 aa).

Positions 2-196 (KVAVVKYNAG…ERVLRNFLDL (195 aa)) constitute a Glutamine amidotransferase type-1 domain. Cys77 acts as the Nucleophile in catalysis. Active-site residues include His178 and Glu180.

As to quaternary structure, heterodimer of HisH and HisF.

Its subcellular location is the cytoplasm. It carries out the reaction 5-[(5-phospho-1-deoxy-D-ribulos-1-ylimino)methylamino]-1-(5-phospho-beta-D-ribosyl)imidazole-4-carboxamide + L-glutamine = D-erythro-1-(imidazol-4-yl)glycerol 3-phosphate + 5-amino-1-(5-phospho-beta-D-ribosyl)imidazole-4-carboxamide + L-glutamate + H(+). The enzyme catalyses L-glutamine + H2O = L-glutamate + NH4(+). Its pathway is amino-acid biosynthesis; L-histidine biosynthesis; L-histidine from 5-phospho-alpha-D-ribose 1-diphosphate: step 5/9. Functionally, IGPS catalyzes the conversion of PRFAR and glutamine to IGP, AICAR and glutamate. The HisH subunit catalyzes the hydrolysis of glutamine to glutamate and ammonia as part of the synthesis of IGP and AICAR. The resulting ammonia molecule is channeled to the active site of HisF. The protein is Imidazole glycerol phosphate synthase subunit HisH of Bacteroides thetaiotaomicron (strain ATCC 29148 / DSM 2079 / JCM 5827 / CCUG 10774 / NCTC 10582 / VPI-5482 / E50).